Consider the following 660-residue polypeptide: DNA mismatch repair protein MutL (660 aa).

The span at 341–355 (SFQSDGAPPTQQLSS) shows a compositional bias: polar residues. 2 disordered regions span residues 341-362 (SFQS…EKAE) and 378-398 (ALSP…RVER). The span at 385 to 398 (ELPKSPERSERVER) shows a compositional bias: basic and acidic residues.

This sequence belongs to the DNA mismatch repair MutL/HexB family.

Its function is as follows. This protein is involved in the repair of mismatches in DNA. It is required for dam-dependent methyl-directed DNA mismatch repair. May act as a 'molecular matchmaker', a protein that promotes the formation of a stable complex between two or more DNA-binding proteins in an ATP-dependent manner without itself being part of a final effector complex. The protein is DNA mismatch repair protein MutL of Heliobacterium modesticaldum (strain ATCC 51547 / Ice1).